A 332-amino-acid polypeptide reads, in one-letter code: MNPWRRYSWEIALAALLIFEILAFGLINPRLLDINVLLFSTSDFICIGIVALPLTMVIVSGGMDISFGSTIGLCAITLGVLFQLGMPLPLAIIITLLLGAICGLINAGLIIYTGVNPLVITLGTMYLFGGSALLLSGMAGATGYEGIGGFPTAFTDFANISFLGIPMPLIFFLVCCLFFWLLMHRTHMGRNVFLIGQSARVAQYSAIPVNRTLYTVYAMTGCASAIAAVLLVSYFGSARSDLGASFLMPTITAVVLGGANIYGGSGSIMGSALAALLVGFLQQGLQMAGVPNQISSALSGALLIVVVVGRSVSLHRHQILEWYSRRRNAHQA.

10 helical membrane passes run Tyr7–Ile27, Ile45–Ile65, Thr70–Leu90, Ala91–Ile111, Leu118–Met138, Phe162–Leu182, Val216–Gly236, Ser240–Asn260, Ile261–Leu281, and Ala288–Val308.

Belongs to the binding-protein-dependent transport system permease family. AraH/RbsC subfamily. The complex is composed of two ATP-binding proteins (LsrA), two transmembrane proteins (LsrC and LsrD) and a solute-binding protein (LsrB).

The protein localises to the cell inner membrane. Functionally, part of the ABC transporter complex LsrABCD involved in autoinducer 2 (AI-2) import. Probably responsible for the translocation of the substrate across the membrane. This chain is Autoinducer 2 import system permease protein LsrD (lsrD), found in Salmonella typhi.